Reading from the N-terminus, the 138-residue chain is Ribosome-binding factor A (138 aa).

The protein belongs to the RbfA family. In terms of assembly, monomer. Binds 30S ribosomal subunits, but not 50S ribosomal subunits or 70S ribosomes.

Its subcellular location is the cytoplasm. Functionally, one of several proteins that assist in the late maturation steps of the functional core of the 30S ribosomal subunit. Associates with free 30S ribosomal subunits (but not with 30S subunits that are part of 70S ribosomes or polysomes). Required for efficient processing of 16S rRNA. May interact with the 5'-terminal helix region of 16S rRNA. The protein is Ribosome-binding factor A of Chromobacterium violaceum (strain ATCC 12472 / DSM 30191 / JCM 1249 / CCUG 213 / NBRC 12614 / NCIMB 9131 / NCTC 9757 / MK).